The chain runs to 302 residues: Urease accessory protein UreD 2 (302 aa).

It belongs to the UreD family. In terms of assembly, ureD, UreF and UreG form a complex that acts as a GTP-hydrolysis-dependent molecular chaperone, activating the urease apoprotein by helping to assemble the nickel containing metallocenter of UreC. The UreE protein probably delivers the nickel.

The protein resides in the cytoplasm. Its function is as follows. Required for maturation of urease via the functional incorporation of the urease nickel metallocenter. The polypeptide is Urease accessory protein UreD 2 (Brucella ovis (strain ATCC 25840 / 63/290 / NCTC 10512)).